Consider the following 335-residue polypeptide: Biotin synthase (335 aa).

One can recognise a Radical SAM core domain in the interval 46-274; the sequence is YNIQLASLFS…KSKIRLSAGR (229 aa). The [4Fe-4S] cluster site is built by Cys61, Cys65, and Cys68. 4 residues coordinate [2Fe-2S] cluster: Cys105, Cys137, Cys197, and Arg269.

This sequence belongs to the radical SAM superfamily. Biotin synthase family. As to quaternary structure, homodimer. [4Fe-4S] cluster serves as cofactor. The cofactor is [2Fe-2S] cluster.

It carries out the reaction (4R,5S)-dethiobiotin + (sulfur carrier)-SH + 2 reduced [2Fe-2S]-[ferredoxin] + 2 S-adenosyl-L-methionine = (sulfur carrier)-H + biotin + 2 5'-deoxyadenosine + 2 L-methionine + 2 oxidized [2Fe-2S]-[ferredoxin]. It participates in cofactor biosynthesis; biotin biosynthesis; biotin from 7,8-diaminononanoate: step 2/2. Functionally, catalyzes the conversion of dethiobiotin (DTB) to biotin by the insertion of a sulfur atom into dethiobiotin via a radical-based mechanism. The chain is Biotin synthase from Prochlorococcus marinus (strain AS9601).